The following is a 443-amino-acid chain: MSLETPRTHYTSQIDIEQIGDDKVTVCGWVHEVRDLGGICFVVVRDREGRAQITLVKKKIDKEIFDAARKLVRESIVAVTGTAKAEGKAPNGYEIIPESIVVLNEAESPLPMDTTGKVDAELDTRLDSRFMDLRRERTTAIFKIRHEVLRAVRDFLSKDGYIETCSPKVVATATEGGTSLFPITYFDREAFLNQSPQLFKQILMSGGLDKVFEIGPIFRAEEHDTRRHLNEATSIDIEASFLDHFDVMEVLEDMVAYVYEQVIENEAASLKALDIELSVPKTPFMKVPYSQAIDIVNAESEETVEWGGDLGTVAEHTIGEHVFKETGESHYFITDWPTEIKPFYAMPYEDNPLISKSFDMMHRTMELSSGAQRIHIHDMLKARIESQGLDSDGFDFYLRAFKYGMPPHSGWGIGCERLVMTMLSVENIRDTVLFPRDRKRLSP.

An L-aspartate-binding site is contributed by Glu175. Residues 197–200 (QLFK) form an aspartate region. Arg219 lines the L-aspartate pocket. ATP contacts are provided by residues 219–221 (RAE), 227–229 (RHL), and Glu366. The Mg(2+) site is built by Glu366 and Ser369. 2 residues coordinate L-aspartate: Ser369 and Arg373. 414–417 (GCER) contacts ATP.

This sequence belongs to the class-II aminoacyl-tRNA synthetase family. Type 2 subfamily. Homodimer. It depends on Mg(2+) as a cofactor.

It is found in the cytoplasm. The enzyme catalyses tRNA(Asx) + L-aspartate + ATP = L-aspartyl-tRNA(Asx) + AMP + diphosphate. In terms of biological role, aspartyl-tRNA synthetase with relaxed tRNA specificity since it is able to aspartylate not only its cognate tRNA(Asp) but also tRNA(Asn). Reaction proceeds in two steps: L-aspartate is first activated by ATP to form Asp-AMP and then transferred to the acceptor end of tRNA(Asp/Asn). In Methanococcoides burtonii (strain DSM 6242 / NBRC 107633 / OCM 468 / ACE-M), this protein is Aspartate--tRNA(Asp/Asn) ligase.